The following is a 470-amino-acid chain: Siroheme synthase (470 aa).

The interval 1-203 (MDYLPIFVEL…GQIQQAEKQL (203 aa)) is precorrin-2 dehydrogenase /sirohydrochlorin ferrochelatase. NAD(+) contacts are provided by residues 22–23 (EV) and 43–44 (PE). Position 128 is a phosphoserine (serine 128). The tract at residues 214 to 470 (GELALVGAGP…ISRPAVVDFA (257 aa)) is uroporphyrinogen-III C-methyltransferase. Proline 223 provides a ligand contact to S-adenosyl-L-methionine. Residue aspartate 246 is the Proton acceptor of the active site. Lysine 268 serves as the catalytic Proton donor. S-adenosyl-L-methionine is bound by residues 299–301 (GGD), isoleucine 304, 329–330 (TA), methionine 381, and glycine 410.

This sequence in the N-terminal section; belongs to the precorrin-2 dehydrogenase / sirohydrochlorin ferrochelatase family. It in the C-terminal section; belongs to the precorrin methyltransferase family.

It catalyses the reaction uroporphyrinogen III + 2 S-adenosyl-L-methionine = precorrin-2 + 2 S-adenosyl-L-homocysteine + H(+). The catalysed reaction is precorrin-2 + NAD(+) = sirohydrochlorin + NADH + 2 H(+). The enzyme catalyses siroheme + 2 H(+) = sirohydrochlorin + Fe(2+). Its pathway is cofactor biosynthesis; adenosylcobalamin biosynthesis; precorrin-2 from uroporphyrinogen III: step 1/1. It participates in cofactor biosynthesis; adenosylcobalamin biosynthesis; sirohydrochlorin from precorrin-2: step 1/1. It functions in the pathway porphyrin-containing compound metabolism; siroheme biosynthesis; precorrin-2 from uroporphyrinogen III: step 1/1. The protein operates within porphyrin-containing compound metabolism; siroheme biosynthesis; siroheme from sirohydrochlorin: step 1/1. Its pathway is porphyrin-containing compound metabolism; siroheme biosynthesis; sirohydrochlorin from precorrin-2: step 1/1. Its function is as follows. Multifunctional enzyme that catalyzes the SAM-dependent methylations of uroporphyrinogen III at position C-2 and C-7 to form precorrin-2 via precorrin-1. Then it catalyzes the NAD-dependent ring dehydrogenation of precorrin-2 to yield sirohydrochlorin. Finally, it catalyzes the ferrochelation of sirohydrochlorin to yield siroheme. The polypeptide is Siroheme synthase (Photorhabdus laumondii subsp. laumondii (strain DSM 15139 / CIP 105565 / TT01) (Photorhabdus luminescens subsp. laumondii)).